The following is a 478-amino-acid chain: Ankyrin repeat and BTB/POZ domain-containing protein 1 (478 aa).

2 ANK repeats span residues 1 to 31 (MDTS…EVNV) and 35 to 64 (WDST…RCEA). BTB domains follow at residues 115–182 (SDVV…DIGV) and 272–346 (PDIC…ELSP). Residues 451 to 477 (VQTYSAIEEAQQRLRALEDLLVSIGLD) adopt a coiled-coil conformation.

In terms of tissue distribution, ubiquitously expressed in all fetal tissues examined including heart, brain, liver, and kidney. Also expressed at lower levels in both adult heart and hypertrophic heart.

The protein localises to the cytoplasm. Its function is as follows. May act as a mediator of the PTEN growth-suppressive signaling pathway. May play a role in developmental processes. The chain is Ankyrin repeat and BTB/POZ domain-containing protein 1 from Homo sapiens (Human).